Consider the following 129-residue polypeptide: Small ribosomal subunit protein uS11 (129 aa).

Belongs to the universal ribosomal protein uS11 family. In terms of assembly, part of the 30S ribosomal subunit. Interacts with proteins S7 and S18. Binds to IF-3.

In terms of biological role, located on the platform of the 30S subunit, it bridges several disparate RNA helices of the 16S rRNA. Forms part of the Shine-Dalgarno cleft in the 70S ribosome. In Bartonella henselae (strain ATCC 49882 / DSM 28221 / CCUG 30454 / Houston 1) (Rochalimaea henselae), this protein is Small ribosomal subunit protein uS11.